Reading from the N-terminus, the 244-residue chain is tRNA pseudouridine synthase A (244 aa).

Asp-52 (nucleophile) is an active-site residue. Tyr-110 is a binding site for substrate.

This sequence belongs to the tRNA pseudouridine synthase TruA family. As to quaternary structure, homodimer.

It carries out the reaction uridine(38/39/40) in tRNA = pseudouridine(38/39/40) in tRNA. Its function is as follows. Formation of pseudouridine at positions 38, 39 and 40 in the anticodon stem and loop of transfer RNAs. The chain is tRNA pseudouridine synthase A from Caldicellulosiruptor bescii (strain ATCC BAA-1888 / DSM 6725 / KCTC 15123 / Z-1320) (Anaerocellum thermophilum).